We begin with the raw amino-acid sequence, 437 residues long: 3-phosphoshikimate 1-carboxyvinyltransferase (437 aa).

Positions 26, 27, and 31 each coordinate 3-phosphoshikimate. Lysine 26 is a phosphoenolpyruvate binding site. The phosphoenolpyruvate site is built by glycine 99 and arginine 127. Residues serine 172, glutamine 174, aspartate 320, and lysine 347 each coordinate 3-phosphoshikimate. Glutamine 174 is a binding site for phosphoenolpyruvate. Aspartate 320 functions as the Proton acceptor in the catalytic mechanism. Phosphoenolpyruvate-binding residues include arginine 351 and arginine 392.

The protein belongs to the EPSP synthase family. As to quaternary structure, monomer.

Its subcellular location is the cytoplasm. The enzyme catalyses 3-phosphoshikimate + phosphoenolpyruvate = 5-O-(1-carboxyvinyl)-3-phosphoshikimate + phosphate. It participates in metabolic intermediate biosynthesis; chorismate biosynthesis; chorismate from D-erythrose 4-phosphate and phosphoenolpyruvate: step 6/7. Its function is as follows. Catalyzes the transfer of the enolpyruvyl moiety of phosphoenolpyruvate (PEP) to the 5-hydroxyl of shikimate-3-phosphate (S3P) to produce enolpyruvyl shikimate-3-phosphate and inorganic phosphate. The chain is 3-phosphoshikimate 1-carboxyvinyltransferase from Methylococcus capsulatus (strain ATCC 33009 / NCIMB 11132 / Bath).